The sequence spans 550 residues: ATP synthase subunit alpha (550 aa).

172-179 (GDRKTGKT) is a binding site for ATP. Residues 514-550 (EDEQRVNEPPAKPLAGEENRETVTRFRDGTTDRPAES) are disordered. Residues 528 to 550 (AGEENRETVTRFRDGTTDRPAES) are compositionally biased toward basic and acidic residues.

The protein belongs to the ATPase alpha/beta chains family. As to quaternary structure, F-type ATPases have 2 components, CF(1) - the catalytic core - and CF(0) - the membrane proton channel. CF(1) has five subunits: alpha(3), beta(3), gamma(1), delta(1), epsilon(1). CF(0) has three main subunits: a(1), b(2) and c(9-12). The alpha and beta chains form an alternating ring which encloses part of the gamma chain. CF(1) is attached to CF(0) by a central stalk formed by the gamma and epsilon chains, while a peripheral stalk is formed by the delta and b chains.

It localises to the cell membrane. It catalyses the reaction ATP + H2O + 4 H(+)(in) = ADP + phosphate + 5 H(+)(out). Produces ATP from ADP in the presence of a proton gradient across the membrane. The alpha chain is a regulatory subunit. This chain is ATP synthase subunit alpha, found in Salinispora arenicola (strain CNS-205).